A 156-amino-acid chain; its full sequence is 6,7-dimethyl-8-ribityllumazine synthase (156 aa).

5-amino-6-(D-ribitylamino)uracil is bound by residues F22, A57 to E59, and T81 to I83. G86 to T87 is a binding site for (2S)-2-hydroxy-3-oxobutyl phosphate. Catalysis depends on H89, which acts as the Proton donor. F114 contributes to the 5-amino-6-(D-ribitylamino)uracil binding site. R128 provides a ligand contact to (2S)-2-hydroxy-3-oxobutyl phosphate.

Belongs to the DMRL synthase family. Forms an icosahedral capsid composed of 60 subunits, arranged as a dodecamer of pentamers.

The enzyme catalyses (2S)-2-hydroxy-3-oxobutyl phosphate + 5-amino-6-(D-ribitylamino)uracil = 6,7-dimethyl-8-(1-D-ribityl)lumazine + phosphate + 2 H2O + H(+). It participates in cofactor biosynthesis; riboflavin biosynthesis; riboflavin from 2-hydroxy-3-oxobutyl phosphate and 5-amino-6-(D-ribitylamino)uracil: step 1/2. Functionally, catalyzes the formation of 6,7-dimethyl-8-ribityllumazine by condensation of 5-amino-6-(D-ribitylamino)uracil with 3,4-dihydroxy-2-butanone 4-phosphate. This is the penultimate step in the biosynthesis of riboflavin. This is 6,7-dimethyl-8-ribityllumazine synthase from Edwardsiella ictaluri (strain 93-146).